Reading from the N-terminus, the 97-residue chain is MQVAYHWQVISRLLIALLRVYKLVISPLLGPRCRFAPSCSDYAMTAIGRFGPLRGSWLAARRLGRCHPFHPGGFDPVPDAPASPSPSSSCSCKGPHP.

Residues 77-97 (VPDAPASPSPSSSCSCKGPHP) are disordered. The segment covering 85–97 (SPSSSCSCKGPHP) has biased composition (low complexity).

It belongs to the UPF0161 family.

The protein localises to the cell inner membrane. In terms of biological role, could be involved in insertion of integral membrane proteins into the membrane. The protein is Putative membrane protein insertion efficiency factor of Xanthomonas euvesicatoria pv. vesicatoria (strain 85-10) (Xanthomonas campestris pv. vesicatoria).